Here is a 695-residue protein sequence, read N- to C-terminus: Protein ACTIVITY OF BC1 COMPLEX KINASE 7, chloroplastic (695 aa).

Residues 259–589 (EFEEQPIAAA…VQEIRKQADD (331 aa)) form the Protein kinase domain. ATP is bound by residues 265 to 273 (IAAASLGQV) and Lys287. The Proton acceptor role is filled by Asp421. The next 2 helical transmembrane spans lie at 633 to 653 (TILQMATMYTVLGGTLLNIGV) and 659 to 679 (GSQLVANGSFIGAGIFMLLVL).

It belongs to the protein kinase superfamily. ADCK protein kinase family. As to expression, mostly expressed in leaves and flowers, and, to a lower extent, in roots.

The protein resides in the plastid. Its subcellular location is the chloroplast thylakoid membrane. The protein localises to the chloroplast. It is found in the plastoglobule. It carries out the reaction L-seryl-[protein] + ATP = O-phospho-L-seryl-[protein] + ADP + H(+). It catalyses the reaction L-threonyl-[protein] + ATP = O-phospho-L-threonyl-[protein] + ADP + H(+). Functionally, involved in resistance to oxidative stress. Influences responses to reactive oxygen species (ROS) production. Regulates plastoglobules formation in thylakoids. Together with OSA1, regulates iron distribution within the chloroplast and mediates the oxidative stress response. Together with ABC1K8, influences chloroplast lipid synthesis/accumulation and modulates chloroplast membrane composition in response to stress. The polypeptide is Protein ACTIVITY OF BC1 COMPLEX KINASE 7, chloroplastic (Arabidopsis thaliana (Mouse-ear cress)).